A 414-amino-acid polypeptide reads, in one-letter code: Putative competence-damage inducible protein (414 aa).

The protein belongs to the CinA family.

This chain is Putative competence-damage inducible protein, found in Listeria monocytogenes serotype 4b (strain CLIP80459).